Consider the following 859-residue polypeptide: Low-density lipoprotein receptor-related protein 12 (859 aa).

An N-terminal signal peptide occupies residues 1–32; sequence MACRWSTKESPRWRSALLLLFLAGVYGNGALA. Over 33-492 the chain is Extracellular; it reads EHSENVHISG…ENCPVIVPTR (460 aa). 2 cysteine pairs are disulfide-bonded: cysteine 47/cysteine 76 and cysteine 103/cysteine 122. Residues 47–159 form the CUB 1 domain; sequence CGETPEQIRA…KGFRLAYFSG (113 aa). An N-linked (GlcNAc...) asparagine glycan is attached at asparagine 75. An N-linked (GlcNAc...) asparagine glycan is attached at asparagine 146. 2 consecutive LDL-receptor class A domains span residues 165-201 and 214-255; these read NCACDQFRCGNGKCIPEAWKCNNMDECGDSSDEEICA and PCAY…IDCD. 7 disulfide bridges follow: cysteine 166–cysteine 178, cysteine 173–cysteine 191, cysteine 185–cysteine 200, cysteine 215–cysteine 232, cysteine 222–cysteine 245, cysteine 239–cysteine 254, and cysteine 259–cysteine 285. The CUB 2 domain maps to 259–372; sequence CGQWLKYFYG…RGFNATYQVD (114 aa). N-linked (GlcNAc...) asparagine glycosylation is found at asparagine 284 and asparagine 366. 3 consecutive LDL-receptor class A domains span residues 374–411, 412–449, and 450–486; these read FCLPWEIPCGGNWGCYTEQQRCDGYWHCPNGRDETNCT, MCQKEEFPCSRNGVCYPRSDRCNYQNHCPNGSDEKNCF, and FCQPGNFHCKNNRCVFESWVCDSQDDCGDGSDEENCP. 9 disulfide bridges follow: cysteine 375/cysteine 388, cysteine 382/cysteine 401, cysteine 395/cysteine 410, cysteine 413/cysteine 426, cysteine 420/cysteine 439, cysteine 433/cysteine 448, cysteine 451/cysteine 463, cysteine 458/cysteine 476, and cysteine 470/cysteine 485. Asparagine 409 carries an N-linked (GlcNAc...) asparagine glycan. N-linked (GlcNAc...) asparagine glycosylation occurs at asparagine 441. The helical transmembrane segment at 493–513 threads the bilayer; sequence VITAAVIGSLICGLLLVIALG. The Cytoplasmic portion of the chain corresponds to 514 to 859; that stretch reads CTCKLYSLRM…TSDDEALLLC (346 aa). Disordered stretches follow at residues 623-678, 693-723, 748-770, and 801-823; these read ADGD…LPQK, ASSSTQSTRGGHADNGRDVTSVEPPSVSPAR, SSLSQNQSPLRQLDNGVSGREDD, and DQGQGLRQPYNATNPGVRPSNRD. Polar residues-rich tracts occupy residues 748–757 and 801–814; these read SSLSQNQSPL and DQGQGLRQPYNATN.

The protein belongs to the LDLR family. In terms of assembly, may interact with RACK1, ZFYVE9 and NMRK2. Widely expressed in heart, skeletal muscle, brain, lung, placenta and pancreas, but not in tissues consisting of a large number of epithelial cells, such as liver and kidney. Expressed at very low levels in a number of tumor-derived cell lines.

It is found in the membrane. The protein localises to the coated pit. Probable receptor, which may be involved in the internalization of lipophilic molecules and/or signal transduction. May act as a tumor suppressor. The polypeptide is Low-density lipoprotein receptor-related protein 12 (LRP12) (Homo sapiens (Human)).